The sequence spans 307 residues: 4-hydroxy-tetrahydrodipicolinate synthase (307 aa).

Residue Ser57 participates in pyruvate binding. The Proton donor/acceptor role is filled by Tyr145. Catalysis depends on Lys173, which acts as the Schiff-base intermediate with substrate. Ile219 lines the pyruvate pocket.

It belongs to the DapA family. In terms of assembly, homotetramer; dimer of dimers.

The protein localises to the cytoplasm. It carries out the reaction L-aspartate 4-semialdehyde + pyruvate = (2S,4S)-4-hydroxy-2,3,4,5-tetrahydrodipicolinate + H2O + H(+). Its pathway is amino-acid biosynthesis; L-lysine biosynthesis via DAP pathway; (S)-tetrahydrodipicolinate from L-aspartate: step 3/4. In terms of biological role, catalyzes the condensation of (S)-aspartate-beta-semialdehyde [(S)-ASA] and pyruvate to 4-hydroxy-tetrahydrodipicolinate (HTPA). This is 4-hydroxy-tetrahydrodipicolinate synthase from Polynucleobacter asymbioticus (strain DSM 18221 / CIP 109841 / QLW-P1DMWA-1) (Polynucleobacter necessarius subsp. asymbioticus).